Reading from the N-terminus, the 440-residue chain is 5-hydroxytryptamine receptor 6 (440 aa).

The Extracellular segment spans residues 1–27 (MVPEPGPVNSSTPAWGPGPPPAPGGSG). N9 is a glycosylation site (N-linked (GlcNAc...) asparagine). Residues 28-52 (WVAAALCVVIVLTAAANSLLIALIC) form a helical membrane-spanning segment. The Cytoplasmic portion of the chain corresponds to 53–62 (TQPALRNTSN). A helical membrane pass occupies residues 63 to 88 (FFLVSLFTSDLMVGLVVMPPAMLNAL). Residues 89-96 (YGRWVLAR) lie on the Extracellular side of the membrane. A helical transmembrane segment spans residues 97 to 122 (GLCLLWTAFDVMCCSASILNLCLISL). A disulfide bond links C99 and C180. Residue D106 coordinates serotonin. Residues 123-142 (DRYLLILSPLRYKLRMTAPR) are Cytoplasmic-facing. A helical membrane pass occupies residues 143-167 (ALALILGAWSLAALASFLPLLLGWH). The Extracellular segment spans residues 168-185 (ELGKARTSAPGQCRLLAS). Residues 186 to 209 (LPYVLVASGVTFFLPSGAICFTYC) traverse the membrane as a helical segment. Topologically, residues 210–268 (RILLAARKQAVQVASLTTGTATAGQALETLQVPRTPRPGMESADSRRLTTKHSRKALKA) are cytoplasmic. The chain crosses the membrane as a helical span at residues 269–295 (SLTLGILLSMFFVTWLPFFVASIAQAV). The Extracellular portion of the chain corresponds to 296–301 (CDCISP). Residues 302–325 (GLFDVLTWLGYCNSTMNPIIYPLF) traverse the membrane as a helical segment. The Cytoplasmic segment spans residues 326–440 (MRDFKRALGR…RQHPLGSPMN (115 aa)).

This sequence belongs to the G-protein coupled receptor 1 family. Interacts with CDK5. Interacts with MTOR. Interacts with RPTOR and NF1.

The protein localises to the cell membrane. Functionally, G-protein coupled receptor for 5-hydroxytryptamine (serotonin), a biogenic hormone that functions as a neurotransmitter, a hormone and a mitogen. Also has a high affinity for tricyclic psychotropic drugs. Ligand binding causes a conformation change that triggers signaling via guanine nucleotide-binding proteins (G proteins) and modulates the activity of downstream effectors. HTR6 is coupled to G(s) G alpha proteins and mediates activation of adenylate cyclase activity. Controls pyramidal neurons migration during corticogenesis, through the regulation of CDK5 activity. Is an activator of mTOR signaling. This is 5-hydroxytryptamine receptor 6 from Mus musculus (Mouse).